Reading from the N-terminus, the 763-residue chain is Phosphoglycerol transferase I (763 aa).

The next 4 membrane-spanning stretches (helical) occupy residues 1–21 (MSEL…AWKA), 24–44 (NTWW…LNIT), 77–97 (ILPG…LGWI), and 108–128 (VGYS…SPAF).

It belongs to the OpgB family.

It is found in the cell inner membrane. The catalysed reaction is a phosphatidylglycerol + a membrane-derived-oligosaccharide D-glucose = a 1,2-diacyl-sn-glycerol + a membrane-derived-oligosaccharide 6-(glycerophospho)-D-glucose.. Its pathway is glycan metabolism; osmoregulated periplasmic glucan (OPG) biosynthesis. Functionally, transfers a phosphoglycerol residue from phosphatidylglycerol to the membrane-bound nascent glucan backbones. This chain is Phosphoglycerol transferase I, found in Salmonella arizonae (strain ATCC BAA-731 / CDC346-86 / RSK2980).